Consider the following 162-residue polypeptide: Solute carrier family 2, facilitated glucose transporter member 4 (162 aa).

The Extracellular portion of the chain corresponds to 1–13 (TSIFETAGVGQPA). The helical transmembrane segment at 14-34 (YATIGAGVVNTVFTLVSVFLV) threads the bilayer. Residue Asn23 coordinates D-glucose. Residues 35 to 43 (ERAGRRTLH) lie on the Cytoplasmic side of the membrane. Residues 44–64 (LLGLAGMCGCAILMTIALLLL) form a helical membrane-spanning segment. Residues 65-75 (ERLPAMSYVSI) lie on the Extracellular side of the membrane. Residues 76–96 (VAIFGFVAFFEIGPGPIPWFI) traverse the membrane as a helical segment. Glu86 and Trp94 together coordinate D-glucose. The Cytoplasmic portion of the chain corresponds to 97–107 (VAELFSQGPRP). A helical membrane pass occupies residues 108 to 128 (AAMAVAGFCNWTSNFIIGMGF). The Extracellular portion of the chain corresponds to 129 to 135 (QYIAXAM). A helical transmembrane segment spans residues 136-156 (GPYVFLLFAVLLLAFFIFTFL). Residues 157–162 (KVPETR) lie on the Cytoplasmic side of the membrane.

This sequence belongs to the major facilitator superfamily. Sugar transporter (TC 2.A.1.1) family. Glucose transporter subfamily. As to quaternary structure, binds to DAXX. Interacts via its N-terminus with SRFBP1. Interacts with NDUFA9. Interacts with TRARG1; the interaction is required for proper SLC2A4 recycling after insulin stimulation. In terms of processing, sumoylated. Palmitoylated. Palmitoylation by ZDHHC7 controls the insulin-dependent translocation of GLUT4 to the plasma membrane.

It is found in the cell membrane. The protein resides in the endomembrane system. Its subcellular location is the cytoplasm. The protein localises to the perinuclear region. The catalysed reaction is D-glucose(out) = D-glucose(in). Insulin-regulated facilitative glucose transporter, which plays a key role in removal of glucose from circulation. Response to insulin is regulated by its intracellular localization: in the absence of insulin, it is efficiently retained intracellularly within storage compartments in muscle and fat cells. Upon insulin stimulation, translocates from these compartments to the cell surface where it transports glucose from the extracellular milieu into the cell. This Canis lupus familiaris (Dog) protein is Solute carrier family 2, facilitated glucose transporter member 4.